An 892-amino-acid polypeptide reads, in one-letter code: DNA replication licensing factor mcm6 (892 aa).

2 positions are modified to phosphoserine: Ser96 and Ser98. One can recognise an MCM domain in the interval 426-633; it reads IYSRLTNSLA…VDRHLAKHIV (208 aa). 476–483 serves as a coordination point for ATP; the sequence is GDPSTSKS. An Arginine finger motif is present at residues 608–611; sequence SRFD. Residues 748-758 show a composition bias toward acidic residues; the sequence is EDDAEAQELEN. Residues 748-774 form a disordered region; it reads EDDAEAQELENDNTNTTNGNDNVSSEE. The span at 759 to 769 shows a compositional bias: low complexity; the sequence is DNTNTTNGNDN.

Belongs to the MCM family. As to quaternary structure, component of the mcm2-7 complex. The complex forms a toroidal hexameric ring with the proposed subunit order mcm2-mcm6-mcm4-mcm7-mcm3-mcm5. The heterodimers of mcm4/mcm6 and mcm3/mcm5 interact with mcm2 and mcm7. Interacts with sld3.

The protein resides in the nucleus. It catalyses the reaction ATP + H2O = ADP + phosphate + H(+). Functionally, acts as a component of the mcm2-7 complex (mcm complex) which is the putative replicative helicase essential for 'once per cell cycle' DNA replication initiation and elongation in eukaryotic cells. The active ATPase sites in the mcm2-7 ring are formed through the interaction surfaces of two neighboring subunits such that a critical structure of a conserved arginine finger motif is provided in trans relative to the ATP-binding site of the Walker A box of the adjacent subunit. The six ATPase active sites, however, are likely to contribute differentially to the complex helicase activity. This is DNA replication licensing factor mcm6 (mcm6) from Schizosaccharomyces pombe (strain 972 / ATCC 24843) (Fission yeast).